Here is a 124-residue protein sequence, read N- to C-terminus: Small ribosomal subunit protein bS6 (124 aa).

A disordered region spans residues 99–124 (PLPAPRIVPGSEPEPVQQQEAAAVEA). The segment covering 111 to 124 (PEPVQQQEAAAVEA) has biased composition (low complexity).

This sequence belongs to the bacterial ribosomal protein bS6 family.

Functionally, binds together with bS18 to 16S ribosomal RNA. This is Small ribosomal subunit protein bS6 from Prochlorococcus marinus (strain MIT 9313).